The sequence spans 296 residues: L-fucono-1,5-lactonase (296 aa).

It belongs to the metallo-dependent hydrolases superfamily. As to quaternary structure, monomer. It depends on Does not require a divalent metal for activity. The purified enzyme contains Zn(2+), but the addition of chelators does not diminish the catalytic activity of the enzyme, indicating that it does not require a divalent cation for substrate turnover. as a cofactor.

The enzyme catalyses L-fucono-1,5-lactone + H2O = L-fuconate + H(+). It carries out the reaction L-fucono-1,4-lactone + H2O = L-fuconate + H(+). It catalyses the reaction D-arabinono-1,4-lactone + H2O = D-arabinonate + H(+). The catalysed reaction is L-xylono-1,4-lactone + H2O = L-xylonate + H(+). The enzyme catalyses L-galactono-1,4-lactone + H2O = L-galactonate + H(+). The protein operates within carbohydrate degradation; L-fucose degradation. Its function is as follows. L-fucono-1,5-lactonase involved in an L-fucose degradation pathway. Catalyzes the hydrolysis of L-fucono-1,5-lactone to L-fuconate. L-fucono-1,5-lactone is the best substrate, but the enzyme can also hydrolyze L-fucono-1,4-lactone, L-galactono-1,4-lactone D-arabinono-1,4-lactone and L-xylono-1,4-lactone. The protein is L-fucono-1,5-lactonase of Burkholderia multivorans (strain ATCC 17616 / 249).